Consider the following 1356-residue polypeptide: Vegetative incompatibility protein HET-E-1 (1356 aa).

Residues 294-629 enclose the NACHT domain; it reads RLLWINGDPG…DFLLGTASDK (336 aa). 300–307 lines the GTP pocket; sequence GDPGKGKT. WD repeat units follow at residues 839–869, 881–911, 923–953, 965–995, 1007–1037, 1049–1079, 1091–1121, 1133–1163, 1175–1205, and 1217–1247; these read GHGS…KIWD, GHGG…KIWD, and GHGD…KIWD.

Its function is as follows. Responsible for vegetative incompatibility through specific interactions with different alleles of the unlinked gene, het-c. This chain is Vegetative incompatibility protein HET-E-1 (HET-E1), found in Podospora anserina (Pleurage anserina).